The sequence spans 377 residues: Peroxisomal membrane protein PEX14 (377 aa).

Low complexity predominate over residues 1–20 (MASSEQAEQPSQPSSSPGSE). The interval 1 to 23 (MASSEQAEQPSQPSSSPGSENVV) is disordered. The residue at position 2 (Ala-2) is an N-acetylalanine. Over 2-108 (ASSEQAEQPS…CSPGSSRWRD (107 aa)) the chain is Peroxisomal. Lys-34 is modified (N6-acetyllysine). A helical membrane pass occupies residues 109–126 (YGALAIIMAGIAFGFHQL). Residues 127–377 (YKKYLLPLIL…EGASNESERH (251 aa)) are Cytoplasmic-facing. Positions 230–377 (PPSPSAPKIP…EGASNESERH (148 aa)) are disordered. Ser-232 is subject to Phosphoserine. 2 stretches are compositionally biased toward low complexity: residues 244-259 (PVKSPSPSSPAAVNHH) and 265-275 (SPVSNESTSSS). A phosphoserine mark is found at Ser-282 and Ser-335. Over residues 323-342 (KEEEEEEEEEDVSHVDEEDV) the composition is skewed to acidic residues. The segment covering 360 to 377 (QVDKLRRPEGASNESERH) has biased composition (basic and acidic residues).

Belongs to the peroxin-14 family. As to quaternary structure, interacts with PEX13; forming the PEX13-PEX14 docking complex. Interacts with PEX5 (via WxxxF/Y motifs). Interacts with PEX19. Interacts with tubulin.

The protein resides in the peroxisome membrane. Functionally, component of the PEX13-PEX14 docking complex, a translocon channel that specifically mediates the import of peroxisomal cargo proteins bound to PEX5 receptor. The PEX13-PEX14 docking complex forms a large import pore which can be opened to a diameter of about 9 nm. Mechanistically, PEX5 receptor along with cargo proteins associates with the PEX14 subunit of the PEX13-PEX14 docking complex in the cytosol, leading to the insertion of the receptor into the organelle membrane with the concomitant translocation of the cargo into the peroxisome matrix. Plays a key role for peroxisome movement through a direct interaction with tubulin. This Cricetulus longicaudatus (Long-tailed dwarf hamster) protein is Peroxisomal membrane protein PEX14.